A 370-amino-acid chain; its full sequence is Histidinol-phosphate aminotransferase 3 (370 aa).

Lysine 233 is modified (N6-(pyridoxal phosphate)lysine).

Belongs to the class-II pyridoxal-phosphate-dependent aminotransferase family. Histidinol-phosphate aminotransferase subfamily. As to quaternary structure, homodimer. Pyridoxal 5'-phosphate is required as a cofactor.

It catalyses the reaction L-histidinol phosphate + 2-oxoglutarate = 3-(imidazol-4-yl)-2-oxopropyl phosphate + L-glutamate. It participates in amino-acid biosynthesis; L-histidine biosynthesis; L-histidine from 5-phospho-alpha-D-ribose 1-diphosphate: step 7/9. This chain is Histidinol-phosphate aminotransferase 3, found in Burkholderia lata (strain ATCC 17760 / DSM 23089 / LMG 22485 / NCIMB 9086 / R18194 / 383).